The primary structure comprises 515 residues: Cytochrome P450 monooxygenase janP (515 aa).

The chain crosses the membrane as a helical span at residues 20-36 (GFLWKYAAFMVFIYLLL). Cysteine 456 contributes to the heme binding site. Asparagine 501 carries an N-linked (GlcNAc...) asparagine glycan.

Belongs to the cytochrome P450 family. It depends on heme as a cofactor.

The protein resides in the membrane. Its pathway is secondary metabolite biosynthesis. Cytochrome P450 monooxygenase; part of the gene cluster that mediates the biosynthesis of the indole diterpenes janthitremanes such as shearinine K or shearinine A. The geranylgeranyl diphosphate (GGPP) synthase janG catalyzes the first step in janthitremane biosynthesis via conversion of farnesyl pyrophosphate and isopentyl pyrophosphate into geranylgeranyl pyrophosphate (GGPP). Condensation of indole-3-glycerol phosphate with GGPP by the prenyl transferase janC then forms 3-geranylgeranylindole (3-GGI). Epoxidation by the FAD-dependent monooxygenase janM leads to a epoxidized-GGI that is substrate of the terpene cyclase janB for cyclization to yield paspaline. Paspaline is subsequently converted to 13-desoxypaspaline by the cytochrome P450 monooxygenase janP, via beta-PC-M6 in a series of alpha-face oxidations. The cytochrome P450 monooxygenase janQ is proposed to carry out sequential beta-face oxidation steps at C-7 and C-13 of 13-desoxypaspaline to form paspalicine and paspalinine respectively. The indole diterpene prenyltransferase janD may then convert paspalinine into shearinine K which is substrate of janO and/or additional enzymes for oxidation and cyclization to generate shearinine A. The chain is Cytochrome P450 monooxygenase janP from Penicillium janthinellum (Penicillium vitale).